A 484-amino-acid polypeptide reads, in one-letter code: Major extracellular endoglucanase (484 aa).

A signal peptide spans 1–25 (MSIFRTASTLALATALALAAGPAFS). Residue Glu-182 is the Proton donor of the active site. Catalysis depends on Glu-303, which acts as the Nucleophile. The segment at 370–402 (GTAGNTTPTPTPTPTPTPTPTPTPTPTPTPGTS) is disordered. Positions 375–399 (TTPTPTPTPTPTPTPTPTPTPTPTP) are thr-Pro repeats ('hinge') (Pro-Thr box). The span at 378 to 398 (TPTPTPTPTPTPTPTPTPTPT) shows a compositional bias: pro residues. Residues 395-484 (PTPTPGTSTF…TAEFGFCAAS (90 aa)) enclose the CBM2 domain.

It belongs to the glycosyl hydrolase 5 (cellulase A) family.

The catalysed reaction is Endohydrolysis of (1-&gt;4)-beta-D-glucosidic linkages in cellulose, lichenin and cereal beta-D-glucans.. In Xanthomonas campestris pv. campestris (strain ATCC 33913 / DSM 3586 / NCPPB 528 / LMG 568 / P 25), this protein is Major extracellular endoglucanase (engXCA).